Consider the following 241-residue polypeptide: Agamous-like MADS-box protein AP1 (241 aa).

The region spanning 1–61 is the MADS-box domain; it reads MGRGRVQLKR…GKLFEYSTDS (61 aa). The K-box domain maps to 88-178; the sequence is QGNWSLEYSK…AKEIKEKEKT (91 aa).

Expressed in tendrils and flowers.

The protein localises to the nucleus. Functionally, probable transcription factor involved in flower development. This is Agamous-like MADS-box protein AP1 from Vitis vinifera (Grape).